A 1359-amino-acid chain; its full sequence is Nuclear protein STH1/NPS1 (1359 aa).

Serine 38 carries the post-translational modification Phosphoserine. Residues 307-383 (LERQQLLEKR…AKQRLAALKS (77 aa)) form the HSA domain. The Helicase ATP-binding domain occupies 482-647 (VSLYNNHLNG…WALLNFVLPK (166 aa)). 495-502 (DEMGLGKT) serves as a coordination point for ATP. The DEGH box motif lies at 597–600 (DEGH). The region spanning 795–956 (LLDRVLPKFK…NKSTAEEQEA (162 aa)) is the Helicase C-terminal domain. Positions 1090–1246 (RERRRLRQNG…TAAKKTKTKS (157 aa)) are disordered. Positions 1108-1126 (LENTPEASETSLIENNSFT) are enriched in polar residues. 2 stretches are compositionally biased toward basic residues: residues 1143–1154 (RSKRRSSRKKRT) and 1198–1210 (KKKKPKLTVKIKL). Basic and acidic residues predominate over residues 1219-1232 (NDGKRAEEKPESKS). Basic residues predominate over residues 1233–1246 (PAKKTAAKKTKTKS). The Bromo domain maps to 1257–1357 (KLVEEMREQL…EFTDEWFKEH (101 aa)).

Belongs to the SNF2/RAD54 helicase family. Interacts directly with SFH1, CSE4, histones H3, H4 and H2B, and via its N-terminus, with RSC8. Interacts with LDB7, NPL6 and RTT102. Component of the two forms of the RSC complex composed of at least either RSC1 or RSC2, and ARP7, ARP9, LDB7, NPL6, RSC3, RSC30, RSC4, RSC58, RSC6, RSC8, RSC9, SFH1, STH1, HTL1 and probably RTT102. The complexes interact with histone and histone variant components of centromeric chromatin.

Its subcellular location is the nucleus. The catalysed reaction is ATP + H2O = ADP + phosphate + H(+). In terms of biological role, catalytic component of the chromatin structure-remodeling complex (RSC), which is involved in transcription regulation and nucleosome positioning. RSC is responsible for the transfer of a histone octamer from a nucleosome core particle to naked DNA. The reaction requires ATP and involves an activated RSC-nucleosome intermediate. Remodeling reaction also involves DNA translocation, DNA twist and conformational change. As a reconfigurer of centromeric and flanking nucleosomes, RSC complex is required both for proper kinetochore function in chromosome segregation and, via a PKC1-dependent signaling pathway, for organization of the cellular cytoskeleton. This subunit is the essential ATPase of the complex. It is a DNA translocase capable of nucleosome remodeling. Required for full expression of early meiotic genes. Essential for mitotic growth and repression of CHA1 expression. Also involved in G2 phase control. The chain is Nuclear protein STH1/NPS1 (STH1) from Saccharomyces cerevisiae (strain ATCC 204508 / S288c) (Baker's yeast).